Reading from the N-terminus, the 215-residue chain is dITP/XTP pyrophosphatase (215 aa).

13-18 (THNTGK) is a binding site for substrate. Asp74 functions as the Proton acceptor in the catalytic mechanism. Asp74 contacts Mg(2+). Substrate is bound by residues Ser75, 163-166 (FGFD), Lys186, and 199-200 (HR).

It belongs to the HAM1 NTPase family. In terms of assembly, homodimer. Requires Mg(2+) as cofactor.

It carries out the reaction XTP + H2O = XMP + diphosphate + H(+). The catalysed reaction is dITP + H2O = dIMP + diphosphate + H(+). The enzyme catalyses ITP + H2O = IMP + diphosphate + H(+). Functionally, pyrophosphatase that catalyzes the hydrolysis of nucleoside triphosphates to their monophosphate derivatives, with a high preference for the non-canonical purine nucleotides XTP (xanthosine triphosphate), dITP (deoxyinosine triphosphate) and ITP. Seems to function as a house-cleaning enzyme that removes non-canonical purine nucleotides from the nucleotide pool, thus preventing their incorporation into DNA/RNA and avoiding chromosomal lesions. The sequence is that of dITP/XTP pyrophosphatase from Bartonella quintana (strain Toulouse) (Rochalimaea quintana).